Here is a 292-residue protein sequence, read N- to C-terminus: tRNA(Ile)-lysidine synthase (292 aa).

Position 32–37 (32–37 (SGGADS)) interacts with ATP.

Belongs to the tRNA(Ile)-lysidine synthase family.

Its subcellular location is the cytoplasm. The enzyme catalyses cytidine(34) in tRNA(Ile2) + L-lysine + ATP = lysidine(34) in tRNA(Ile2) + AMP + diphosphate + H(+). Functionally, ligates lysine onto the cytidine present at position 34 of the AUA codon-specific tRNA(Ile) that contains the anticodon CAU, in an ATP-dependent manner. Cytidine is converted to lysidine, thus changing the amino acid specificity of the tRNA from methionine to isoleucine. The sequence is that of tRNA(Ile)-lysidine synthase from Corynebacterium diphtheriae (strain ATCC 700971 / NCTC 13129 / Biotype gravis).